Reading from the N-terminus, the 249-residue chain is Small ribosomal subunit protein eS6 (249 aa).

Lys-14 is covalently cross-linked (Glycyl lysine isopeptide (Lys-Gly) (interchain with G-Cter in SUMO2)). ADP-ribosyl glutamic acid is present on Glu-35. Residue Arg-137 is modified to (3R)-3-hydroxyarginine. A Phosphoserine modification is found at Ser-148. Lys-211 is modified (N6-acetyllysine). Basic and acidic residues predominate over residues 217 to 229; that stretch reads MKEAKEKRQEQIA. Positions 217–249 are disordered; that stretch reads MKEAKEKRQEQIAKRRRLSSLRASTSKSESSQK. Phosphoserine; by RPS6KA1, RPS6KA3, DAPK1 and PASK occurs at positions 235 and 236. The segment covering 236-249 has biased composition (low complexity); that stretch reads SLRASTSKSESSQK. A phosphoserine mark is found at Ser-240, Ser-242, Ser-244, and Ser-247.

This sequence belongs to the eukaryotic ribosomal protein eS6 family. Component of the small ribosomal subunit. Part of the small subunit (SSU) processome, composed of more than 70 proteins and the RNA chaperone small nucleolar RNA (snoRNA) U3. Post-translationally, ribosomal protein S6 is the major substrate of protein kinases in eukaryote ribosomes. The phosphorylation is stimulated by growth factors, tumor promoting agents, and mitogens. It is dephosphorylated at growth arrest. Phosphorylated at Ser-235 and Ser-236 by RPS6KA1 and RPS6KA3; phosphorylation at these sites facilitates the assembly of the pre-initiation complex. In terms of processing, specifically hydroxylated (with R stereochemistry) at C-3 of Arg-137 by KDM8. Mono-ADP-ribosylation at Glu-35 by PARP16 inhibits polysome assembly and mRNA loading, thereby inhibiting protein translation.

It localises to the cytoplasm. It is found in the nucleus. The protein resides in the nucleolus. In terms of biological role, component of the 40S small ribosomal subunit. Plays an important role in controlling cell growth and proliferation through the selective translation of particular classes of mRNA. Part of the small subunit (SSU) processome, first precursor of the small eukaryotic ribosomal subunit. During the assembly of the SSU processome in the nucleolus, many ribosome biogenesis factors, an RNA chaperone and ribosomal proteins associate with the nascent pre-rRNA and work in concert to generate RNA folding, modifications, rearrangements and cleavage as well as targeted degradation of pre-ribosomal RNA by the RNA exosome. This is Small ribosomal subunit protein eS6 (RPS6) from Bos taurus (Bovine).